A 553-amino-acid chain; its full sequence is Telomere repeat-binding protein 2 (553 aa).

The interval 147-170 (SSTEVGACGNGSPNESRDDVNLFS) is disordered. The Ubiquitin-like domain occupies 285–364 (VKLRIKSFRV…HLDSLGFSLE (80 aa)). The disordered stretch occupies residues 394–413 (ALDSSHEPEPSPADSFGKLG). The region spanning 448–507 (AQRRIRRPFSVTEVEALVQAVEKLGTGRWRDVKVRAFEDADHRTYVDLKDKWKTLVHTAR) is the HTH myb-type domain. Positions 476-503 (WRDVKVRAFEDADHRTYVDLKDKWKTLV) form a DNA-binding region, H-T-H motif.

As to quaternary structure, homodimer and heterodimer with TRP1. Interacts with SNL1. Expressed ubiquitously. Highest expression in flowers and leaves.

It localises to the nucleus. In terms of biological role, binds specifically to the plant telomeric double-stranded DNA sequences. At least 2 repeats of telomeric sequences are required for binding. Induces DNA bending. The sequence is that of Telomere repeat-binding protein 2 (TRP2) from Arabidopsis thaliana (Mouse-ear cress).